The sequence spans 350 residues: Ion-translocating oxidoreductase complex subunit D (350 aa).

4 helical membrane passes run Tyr-37–Ala-57, Ala-78–Val-109, Ala-124–Ala-144, and Thr-158–Ile-178. Thr-185 is modified (FMN phosphoryl threonine). Transmembrane regions (helical) follow at residues Ser-212 to Leu-232, Trp-239 to Ile-259, Phe-264 to Ala-284, Leu-298 to Pro-318, and Asp-319 to Val-339.

This sequence belongs to the NqrB/RnfD family. In terms of assembly, the complex is composed of six subunits: RnfA, RnfB, RnfC, RnfD, RnfE and RnfG. Requires FMN as cofactor.

It localises to the cell inner membrane. Part of a membrane-bound complex that couples electron transfer with translocation of ions across the membrane. The chain is Ion-translocating oxidoreductase complex subunit D from Shewanella frigidimarina (strain NCIMB 400).